The following is a 439-amino-acid chain: Probable serine/threonine-protein kinase WNK6 (439 aa).

Positions 1–30 are disordered; the sequence is MMPPKPAAEDVADEQPEPPDEDPDVAEADP. A compositionally biased stretch (acidic residues) spans 10 to 27; it reads DVADEQPEPPDEDPDVAE. The 259-residue stretch at 35–293 folds into the Protein kinase domain; the sequence is LRYREIIGSG…ASELLKSPFL (259 aa). ATP-binding positions include 116 to 119 and Lys166; that span reads TELF. The active-site Proton acceptor is Asp183.

This sequence belongs to the protein kinase superfamily. Ser/Thr protein kinase family. WNK subfamily.

It carries out the reaction L-seryl-[protein] + ATP = O-phospho-L-seryl-[protein] + ADP + H(+). The catalysed reaction is L-threonyl-[protein] + ATP = O-phospho-L-threonyl-[protein] + ADP + H(+). The protein is Probable serine/threonine-protein kinase WNK6 (WNK6) of Oryza sativa subsp. japonica (Rice).